The primary structure comprises 941 residues: Isoleucine--tRNA ligase (941 aa).

The 'HIGH' region motif lies at 59–69 (PYANGNIHIGH). Glu562 contributes to the L-isoleucyl-5'-AMP binding site. The 'KMSKS' region signature appears at 603 to 607 (KMSKS). Residue Lys606 participates in ATP binding. Zn(2+) is bound by residues Cys904, Cys907, Cys924, and Cys927.

This sequence belongs to the class-I aminoacyl-tRNA synthetase family. IleS type 1 subfamily. Monomer. Requires Zn(2+) as cofactor.

The protein localises to the cytoplasm. It carries out the reaction tRNA(Ile) + L-isoleucine + ATP = L-isoleucyl-tRNA(Ile) + AMP + diphosphate. Functionally, catalyzes the attachment of isoleucine to tRNA(Ile). As IleRS can inadvertently accommodate and process structurally similar amino acids such as valine, to avoid such errors it has two additional distinct tRNA(Ile)-dependent editing activities. One activity is designated as 'pretransfer' editing and involves the hydrolysis of activated Val-AMP. The other activity is designated 'posttransfer' editing and involves deacylation of mischarged Val-tRNA(Ile). This Haemophilus influenzae (strain PittGG) protein is Isoleucine--tRNA ligase.